Consider the following 542-residue polypeptide: MAKDIKFSEDARRAMLRGVDQLANAVKVTLGPKGRNVVLEKKFGSPLITNDGVTIAKEIELEDPFENMGAKLVSEVASKTNDVAGDGTTTATVLAQAMIQEGLKNVTAGANPVGVRRGIEKAVATAIEELKAISKPIESKESIAQVAAISSGDEEVGKLIAEAMERVGNDGVITIEESKGFATELDVVEGMQFDRGYTSPYMVTDSDKMEAVLEKPYILITDKKINNIQEILPVLEQVVQQGRPMLIIAEDVEGEAQATLVLNKLRGTFNVVAVKAPGFGDRRKAMLEDIAILTGGQVITEDLGLELKTATVDQLGTANKVVVTKDDTTIVEGAGDSTQISARVNQIRAQMEETTSEFDREKLQERLAKLAGGVAVVKVGAATETELKERKLRIEDALNSTRAAVEEGIVAGGGTALVSIYNKVAALEAEGDVETGINIVLRSLEEPVRQIAHNAGLEGSVIVERLKHEAVGVGFNAANGEWVNMIDAGIVDPTKVTRSALQNASSVAALLLTTEAVVADKPDENGPAAVPDMGMGGMGGMM.

ATP is bound by residues 29–32 (TLGP), 86–90 (DGTTT), Gly-413, 476–478 (NAA), and Asp-492. The segment at 522–542 (PDENGPAAVPDMGMGGMGGMM) is disordered.

It belongs to the chaperonin (HSP60) family. In terms of assembly, forms a cylinder of 14 subunits composed of two heptameric rings stacked back-to-back. Interacts with the co-chaperonin GroES.

Its subcellular location is the cytoplasm. The catalysed reaction is ATP + H2O + a folded polypeptide = ADP + phosphate + an unfolded polypeptide.. Functionally, together with its co-chaperonin GroES, plays an essential role in assisting protein folding. The GroEL-GroES system forms a nano-cage that allows encapsulation of the non-native substrate proteins and provides a physical environment optimized to promote and accelerate protein folding. The polypeptide is Chaperonin GroEL (Listeria monocytogenes serotype 4b (strain CLIP80459)).